The chain runs to 361 residues: MALTLEALVARFGGEIVGDGRREVGGLAPLDQAGPQHLAFLANPKYLAQVETTAAGAVLIAPRDLEKLGAAANGRNFIITPNPYAYFARVAQMFIDLAAPQRAAGVHPSATIDPAAQVAASAVIGPHVSVEAGAVIGERVQLDANVFVGRGTRIGDDSHLYPNVTIYHGCTLGPRAIVHSGAVIGSDGFGFAPDFVGEGDARTGAWVKIPQVGGVKVGPDVEIGANTTIDRGAMADTVIDECVKIDNLVQIGHNCRIGAYTVIAGCAGIAGSTTIGKHCMIGGAVGVAGHVTLGDYVIVTAKSGVSKSLPKAGIYTSAFPAVEHGDWNKSAALVRNLDKLRDRIKALETALAAREGDAGGA.

Residue His-253 is the Proton acceptor of the active site.

The protein belongs to the transferase hexapeptide repeat family. LpxD subfamily. As to quaternary structure, homotrimer.

It catalyses the reaction a UDP-3-O-[(3R)-3-hydroxyacyl]-alpha-D-glucosamine + a (3R)-hydroxyacyl-[ACP] = a UDP-2-N,3-O-bis[(3R)-3-hydroxyacyl]-alpha-D-glucosamine + holo-[ACP] + H(+). It functions in the pathway bacterial outer membrane biogenesis; LPS lipid A biosynthesis. Functionally, catalyzes the N-acylation of UDP-3-O-acylglucosamine using 3-hydroxyacyl-ACP as the acyl donor. Is involved in the biosynthesis of lipid A, a phosphorylated glycolipid that anchors the lipopolysaccharide to the outer membrane of the cell. The chain is UDP-3-O-acylglucosamine N-acyltransferase from Burkholderia thailandensis (strain ATCC 700388 / DSM 13276 / CCUG 48851 / CIP 106301 / E264).